The following is a 229-amino-acid chain: Putative N-acetylmannosamine-6-phosphate 2-epimerase (229 aa).

Belongs to the NanE family.

The catalysed reaction is an N-acyl-D-glucosamine 6-phosphate = an N-acyl-D-mannosamine 6-phosphate. Its pathway is amino-sugar metabolism; N-acetylneuraminate degradation; D-fructose 6-phosphate from N-acetylneuraminate: step 3/5. Functionally, converts N-acetylmannosamine-6-phosphate (ManNAc-6-P) to N-acetylglucosamine-6-phosphate (GlcNAc-6-P). This is Putative N-acetylmannosamine-6-phosphate 2-epimerase from Shigella sonnei (strain Ss046).